We begin with the raw amino-acid sequence, 227 residues long: ATP-dependent dethiobiotin synthetase BioD (227 aa).

13 to 18 contributes to the ATP binding site; sequence DIGKTY. Residue Thr17 participates in Mg(2+) binding. The active site involves Lys38. Residue Ser42 participates in substrate binding. Residues Asp55, 116–119, and 179–180 contribute to the ATP site; these read EGSG and NN. The Mg(2+) site is built by Asp55 and Glu116.

This sequence belongs to the dethiobiotin synthetase family. As to quaternary structure, homodimer. It depends on Mg(2+) as a cofactor.

The protein resides in the cytoplasm. The enzyme catalyses (7R,8S)-7,8-diammoniononanoate + CO2 + ATP = (4R,5S)-dethiobiotin + ADP + phosphate + 3 H(+). Its pathway is cofactor biosynthesis; biotin biosynthesis; biotin from 7,8-diaminononanoate: step 1/2. Functionally, catalyzes a mechanistically unusual reaction, the ATP-dependent insertion of CO2 between the N7 and N8 nitrogen atoms of 7,8-diaminopelargonic acid (DAPA, also called 7,8-diammoniononanoate) to form a ureido ring. In Clostridium botulinum (strain Okra / Type B1), this protein is ATP-dependent dethiobiotin synthetase BioD.